The sequence spans 596 residues: Pentatricopeptide repeat-containing protein At1g80270, mitochondrial (596 aa).

The N-terminal 69 residues, 1-69 (MFALSKVLRR…RALSSSAGTK (69 aa)), are a transit peptide targeting the mitochondrion. The disordered stretch occupies residues 62-119 (LSSSAGTKSDQEEDDLEDGFSELEGSKSGQGSTSSDEDEGKLSADEEEEEELDLIETD). Acidic residues-rich tracts occupy residues 72–82 (QEEDDLEDGFS) and 96–117 (SDED…DLIE). 9 PPR repeats span residues 228–262 (GEVL…GFPL), 263–296 (SGFT…NIKP), 297–331 (SLLT…GVEL), 332–366 (DFQT…SLEA), 367–397 (NRRA…CESK), 399–433 (YFEE…DRRA), 434–468 (SSST…GCRI), 469–503 (EATT…SHTK), and 505–539 (MMNS…GYTS).

Belongs to the PPR family. P subfamily.

It localises to the mitochondrion. The polypeptide is Pentatricopeptide repeat-containing protein At1g80270, mitochondrial (Arabidopsis thaliana (Mouse-ear cress)).